A 326-amino-acid polypeptide reads, in one-letter code: MTKFKLEYIWLDGYTPVPNLRGKTQIKEFDEFPTLEQLPLWGFDGSSTMQAEGSSDCVLKPVAIYPDPARTNGALVMCEVMMPDGHAHASNARATILDDEDAWFGFEQEYFFYQNGRPLGFPEQGYPAPQPYYTGVGYSNVGDVAREIVEEHLDLCLAAGINHEGINAEVAKGQWEFQIFGKGSKKAADQIWMARYLLQRLTEKYGIDIEYHCKPLGDTDWNGSGMHCNFSTKYLREVGGKEYFEALMASSDKNLMDHIAVYGPDNDKRLTGKHETAPWNKFSYGVADRGASIRVPHSFIKNDYKGYLEDRRPNSQGDPYQIVRRF.

One can recognise a GS beta-grasp domain in the interval 4–85; the sequence is FKLEYIWLDG…VMCEVMMPDG (82 aa). Positions 83-326 constitute a GS catalytic domain; that stretch reads PDGHAHASNA…GDPYQIVRRF (244 aa). Positions 107 and 109 each coordinate Mg(2+). Glu-164 provides a ligand contact to ATP. Mg(2+) is bound by residues Glu-169 and Glu-176. Glu-275 is an L-glutamate binding site.

Belongs to the glutamine synthetase family. As to quaternary structure, homooctamer and homotetramer. Mg(2+) serves as cofactor.

It localises to the cytoplasm. It catalyses the reaction L-glutamate + NH4(+) + ATP = L-glutamine + ADP + phosphate + H(+). With respect to regulation, transferase activity is inhibited by NH(4)Cl. Functionally, catalyzes the ATP-dependent biosynthesis of glutamine from glutamate and ammonia. In Rhizobium leguminosarum bv. phaseoli, this protein is Glutamine synthetase.